The sequence spans 196 residues: Imidazole glycerol phosphate synthase subunit HisH (196 aa).

The Glutamine amidotransferase type-1 domain occupies 2-196 (NIVIIDTNCS…QQLVKNFLEI (195 aa)). The active-site Nucleophile is Cys-77. Residues His-178 and Glu-180 contribute to the active site.

Heterodimer of HisH and HisF.

The protein localises to the cytoplasm. The catalysed reaction is 5-[(5-phospho-1-deoxy-D-ribulos-1-ylimino)methylamino]-1-(5-phospho-beta-D-ribosyl)imidazole-4-carboxamide + L-glutamine = D-erythro-1-(imidazol-4-yl)glycerol 3-phosphate + 5-amino-1-(5-phospho-beta-D-ribosyl)imidazole-4-carboxamide + L-glutamate + H(+). The enzyme catalyses L-glutamine + H2O = L-glutamate + NH4(+). Its pathway is amino-acid biosynthesis; L-histidine biosynthesis; L-histidine from 5-phospho-alpha-D-ribose 1-diphosphate: step 5/9. IGPS catalyzes the conversion of PRFAR and glutamine to IGP, AICAR and glutamate. The HisH subunit catalyzes the hydrolysis of glutamine to glutamate and ammonia as part of the synthesis of IGP and AICAR. The resulting ammonia molecule is channeled to the active site of HisF. This Blochmanniella pennsylvanica (strain BPEN) protein is Imidazole glycerol phosphate synthase subunit HisH.